Here is a 225-residue protein sequence, read N- to C-terminus: PKHD-type hydroxylase YbiX (225 aa).

Positions 78-177 (TLSTPLFNRY…RVASFMWIQS (100 aa)) constitute a Fe2OG dioxygenase domain. Fe cation contacts are provided by H96, D98, and H158. Residue R168 coordinates 2-oxoglutarate.

Fe(2+) is required as a cofactor. Requires L-ascorbate as cofactor.

The sequence is that of PKHD-type hydroxylase YbiX from Shigella sonnei (strain Ss046).